A 458-amino-acid chain; its full sequence is Glutamyl-tRNA reductase (458 aa).

Substrate contacts are provided by residues 49-52, S109, 114-116, and Q120; these read TCNR and EQQ. Catalysis depends on C50, which acts as the Nucleophile. Residue 191–196 coordinates NADP(+); sequence GAGAMA.

The protein belongs to the glutamyl-tRNA reductase family. In terms of assembly, homodimer.

The catalysed reaction is (S)-4-amino-5-oxopentanoate + tRNA(Glu) + NADP(+) = L-glutamyl-tRNA(Glu) + NADPH + H(+). It participates in porphyrin-containing compound metabolism; protoporphyrin-IX biosynthesis; 5-aminolevulinate from L-glutamyl-tRNA(Glu): step 1/2. Functionally, catalyzes the NADPH-dependent reduction of glutamyl-tRNA(Glu) to glutamate 1-semialdehyde (GSA). The chain is Glutamyl-tRNA reductase from Corynebacterium aurimucosum (strain ATCC 700975 / DSM 44827 / CIP 107346 / CN-1) (Corynebacterium nigricans).